The primary structure comprises 250 residues: UPF0193 protein EVG1 homolog (250 aa).

The interval 86 to 110 is disordered; it reads ESLRNGEPLPLPEPPRPNTNNDPDK.

The protein belongs to the UPF0193 (EVG1) family.

The chain is UPF0193 protein EVG1 homolog from Drosophila melanogaster (Fruit fly).